A 264-amino-acid chain; its full sequence is Zinc finger protein CG30 (264 aa).

The segment at 8–63 (CNICFSVAEIKNYFLQPIDRLTIIPVLELDTCKHQLCSMCIRKIRKRKKVPCPLCR) adopts an RING-type zinc-finger fold.

The protein localises to the host nucleus. Its function is as follows. Plays a role in the proper expression of late and very late genes. This is Zinc finger protein CG30 (CG30) from Autographa californica nuclear polyhedrosis virus (AcMNPV).